A 201-amino-acid chain; its full sequence is uncharacterized protein (201 aa).

A helical membrane pass occupies residues 11–31; sequence IWKSLYLLIIVGMLYIGYILI.

The protein localises to the membrane. This is an uncharacterized protein from Rickettsia prowazekii (strain Madrid E).